Reading from the N-terminus, the 379-residue chain is Queuine tRNA-ribosyltransferase (379 aa).

D93 functions as the Proton acceptor in the catalytic mechanism. Substrate is bound by residues 93-97, D147, Q191, and G218; that span reads DSGGF. Residues 249–255 are RNA binding; sequence GVGKPED. D268 (nucleophile) is an active-site residue. The segment at 273-277 is RNA binding; important for wobble base 34 recognition; the sequence is TRNAR. Residues C306, C308, C311, and H337 each contribute to the Zn(2+) site.

Belongs to the queuine tRNA-ribosyltransferase family. As to quaternary structure, homodimer. Within each dimer, one monomer is responsible for RNA recognition and catalysis, while the other monomer binds to the replacement base PreQ1. It depends on Zn(2+) as a cofactor.

The catalysed reaction is 7-aminomethyl-7-carbaguanine + guanosine(34) in tRNA = 7-aminomethyl-7-carbaguanosine(34) in tRNA + guanine. The protein operates within tRNA modification; tRNA-queuosine biosynthesis. Functionally, catalyzes the base-exchange of a guanine (G) residue with the queuine precursor 7-aminomethyl-7-deazaguanine (PreQ1) at position 34 (anticodon wobble position) in tRNAs with GU(N) anticodons (tRNA-Asp, -Asn, -His and -Tyr). Catalysis occurs through a double-displacement mechanism. The nucleophile active site attacks the C1' of nucleotide 34 to detach the guanine base from the RNA, forming a covalent enzyme-RNA intermediate. The proton acceptor active site deprotonates the incoming PreQ1, allowing a nucleophilic attack on the C1' of the ribose to form the product. After dissociation, two additional enzymatic reactions on the tRNA convert PreQ1 to queuine (Q), resulting in the hypermodified nucleoside queuosine (7-(((4,5-cis-dihydroxy-2-cyclopenten-1-yl)amino)methyl)-7-deazaguanosine). The protein is Queuine tRNA-ribosyltransferase of Actinobacillus succinogenes (strain ATCC 55618 / DSM 22257 / CCUG 43843 / 130Z).